The sequence spans 233 residues: Ribose-5-phosphate isomerase A (233 aa).

Residues 28–31 (SGST), 83–86 (DGAD), and 96–99 (KGGG) contribute to the substrate site. The Proton acceptor role is filled by glutamate 105. Lysine 123 serves as a coordination point for substrate.

Belongs to the ribose 5-phosphate isomerase family. In terms of assembly, homodimer.

It carries out the reaction aldehydo-D-ribose 5-phosphate = D-ribulose 5-phosphate. It functions in the pathway carbohydrate degradation; pentose phosphate pathway; D-ribose 5-phosphate from D-ribulose 5-phosphate (non-oxidative stage): step 1/1. In terms of biological role, catalyzes the reversible conversion of ribose-5-phosphate to ribulose 5-phosphate. In Bartonella bacilliformis (strain ATCC 35685 / KC583 / Herrer 020/F12,63), this protein is Ribose-5-phosphate isomerase A.